Reading from the N-terminus, the 62-residue chain is UPF0434 protein RL4569 (62 aa).

It belongs to the UPF0434 family.

The polypeptide is UPF0434 protein RL4569 (Rhizobium johnstonii (strain DSM 114642 / LMG 32736 / 3841) (Rhizobium leguminosarum bv. viciae)).